The sequence spans 345 residues: Phosphoribosylformylglycinamidine cyclo-ligase (345 aa).

This sequence belongs to the AIR synthase family.

Its subcellular location is the cytoplasm. The enzyme catalyses 2-formamido-N(1)-(5-O-phospho-beta-D-ribosyl)acetamidine + ATP = 5-amino-1-(5-phospho-beta-D-ribosyl)imidazole + ADP + phosphate + H(+). It participates in purine metabolism; IMP biosynthesis via de novo pathway; 5-amino-1-(5-phospho-D-ribosyl)imidazole from N(2)-formyl-N(1)-(5-phospho-D-ribosyl)glycinamide: step 2/2. In Sodalis glossinidius (strain morsitans), this protein is Phosphoribosylformylglycinamidine cyclo-ligase.